The sequence spans 380 residues: N-acetylaspartylglutamate synthase A (380 aa).

Positions 115–300 (FQELAGHGVP…VGAIIADYAM (186 aa)) constitute an ATP-grasp domain. Residues K154, 189–199 (QKYVKESHGKD), and R215 contribute to the ATP site. Mg(2+) is bound by residues D260, E273, and N275. Residues D260, E273, and N275 each contribute to the Mn(2+) site. At S319 the chain carries Phosphoserine. Residues 345–370 (GSTSSESEPELGEARDSSVKTMGAPP) form a disordered region.

The protein belongs to the RimK family. Mg(2+) serves as cofactor. Mn(2+) is required as a cofactor. Highly expressed in spinal cord and brain.

It localises to the cytoplasm. It carries out the reaction N-acetyl-L-aspartate + L-glutamate + ATP = N-acetyl-L-aspartyl-L-glutamate + ADP + phosphate + H(+). It catalyses the reaction N-acetyl-L-aspartate + 2 L-glutamate + 2 ATP = N-acetyl-L-aspartyl-L-glutamyl-L-glutamate + 2 ADP + 2 phosphate + 2 H(+). In terms of biological role, catalyzes the synthesis of N-acetyl-L-aspartyl-L-glutamate (NAAG) and N-acetyl-L-aspartyl-L-glutamyl-L-glutamate. This Mus musculus (Mouse) protein is N-acetylaspartylglutamate synthase A (Rimkla).